We begin with the raw amino-acid sequence, 89 residues long: HssA/B-like protein 22 (89 aa).

Belongs to the hssA/B family.

In Dictyostelium discoideum (Social amoeba), this protein is HssA/B-like protein 22 (hssl22).